The primary structure comprises 146 residues: Acidic phospholipase A2 D (146 aa).

The N-terminal stretch at 1–21 is a signal peptide; it reads MNPAHLLILAAVCVSPLGASS. A propeptide spanning residues 22-27 is cleaved from the precursor; that stretch reads NRPMPL. 7 cysteine pairs are disulfide-bonded: C38-C98, C53-C145, C55-C71, C70-C126, C77-C119, C87-C112, and C105-C117. Residues Y54, G56, and G58 each contribute to the Ca(2+) site. H74 is a catalytic residue. Ca(2+) is bound at residue D75. D120 is an active-site residue.

It belongs to the phospholipase A2 family. Group I subfamily. D49 sub-subfamily. Ca(2+) serves as cofactor. As to expression, expressed by the venom gland.

The protein localises to the secreted. The catalysed reaction is a 1,2-diacyl-sn-glycero-3-phosphocholine + H2O = a 1-acyl-sn-glycero-3-phosphocholine + a fatty acid + H(+). Its function is as follows. PLA2 catalyzes the calcium-dependent hydrolysis of the 2-acyl groups in 3-sn-phosphoglycerides. This is Acidic phospholipase A2 D from Naja sputatrix (Malayan spitting cobra).